The sequence spans 475 residues: Dihydrolipoyl dehydrogenase (475 aa).

FAD contacts are provided by residues 36–45, lysine 54, and glycine 117; that span reads ERYNTLGGVC. Cysteines 45 and 50 form a disulfide. NAD(+) is bound by residues 182-186, glutamate 205, valine 238, and 270-273; these read GGGII and AIGR. Aspartate 313 and alanine 321 together coordinate FAD. Histidine 445 serves as the catalytic Proton acceptor.

It belongs to the class-I pyridine nucleotide-disulfide oxidoreductase family. It depends on FAD as a cofactor.

The protein resides in the cytoplasm. The enzyme catalyses N(6)-[(R)-dihydrolipoyl]-L-lysyl-[protein] + NAD(+) = N(6)-[(R)-lipoyl]-L-lysyl-[protein] + NADH + H(+). Functionally, the branched-chain alpha-keto dehydrogenase complex catalyzes the overall conversion of alpha-keto acids to acyl-CoA and CO(2). It contains multiple copies of 3 enzymatic components: branched-chain alpha-keto acid decarboxylase (E1), lipoamide acyltransferase (E2) and lipoamide dehydrogenase (E3). The protein is Dihydrolipoyl dehydrogenase (lpd) of Vibrio cholerae serotype O1 (strain ATCC 39315 / El Tor Inaba N16961).